The sequence spans 4644 residues: Cytoplasmic dynein 1 heavy chain 1 (4644 aa).

The residue at position 2 (S2) is an N-acetylserine. The tract at residues 2-1865 (SETGGGEDGS…SIQMANAKFN (1864 aa)) is stem. 4 coiled-coil regions span residues 48-69 (AALE…FLSD), 179-200 (SVEK…NIEI), 453-476 (AHRK…QLRA), and 541-564 (TEAW…RITA). S68 is modified (phosphoserine). An interaction with DYNC1I2 region spans residues 446–701 (MVWRINPAHR…NTQEIFDDWA (256 aa)). The interaction with DYNC1LI2 stretch occupies residues 649–800 (AKQIDRQLTA…EKVEERNTIS (152 aa)). K1123 is modified (N6-acetyllysine). The stretch at 1169-1201 (TYVQSLKRKIKQFEKQVELYRNGQRLLEKQRFQ) forms a coiled coil. The residue at position 1228 (S1228) is a Phosphoserine. Coiled coils occupy residues 1229 to 1250 (AIQQ…AVES) and 1355 to 1371 (RKLR…LKNF). AAA stretches follow at residues 1866–2097 (YGFE…VLVS), 2178–2450 (EELK…LTRL), 2554–2803 (EVET…WVRG), and 2897–3166 (VFYE…GGRT). ATP is bound by residues 1904 to 1911 (GPAGTGKT) and 2222 to 2229 (GPSGSGKS). The tract at residues 2389-2409 (EDEAQRRRKGKEDEGEEAASP) is disordered. ATP-binding positions include 2593–2600 (GPPGSGKT) and 2935–2942 (GVSGAGKT). Coiled-coil stretches lie at residues 3187-3273 (EKRS…ADKQ), 3394-3498 (AIAQ…KNQM), and 3735-3798 (EFQL…VSQQ). Residues 3187–3498 (EKRSELEEQQ…KTSETFKNQM (312 aa)) form a stalk region. Residue K3478 is modified to N6-acetyllysine. 2 AAA regions span residues 3551-3780 (LSNA…EVTR) and 4003-4219 (AHMF…TVDT). S4160 is subject to Phosphoserine. Residue K4281 is modified to N6-acetyllysine. At T4364 the chain carries Phosphothreonine.

It belongs to the dynein heavy chain family. In terms of assembly, homodimer. The cytoplasmic dynein 1 complex consists of two catalytic heavy chains (HCs) and a number of non-catalytic subunits presented by intermediate chains (ICs), light intermediate chains (LICs) and light chains (LCs); the composition seems to vary in respect to the IC, LIC and LC composition. The heavy chain homodimer serves as a scaffold for the probable homodimeric assembly of the respective non-catalytic subunits. The ICs and LICs bind directly to the HC dimer and dynein LCs assemble on the IC dimer. Interacts with DYNC1LI1; DYNC1LI1 and DYNC1LI2 bind mutually exclusive to DYNC1H1. Interacts with DYNC1LI2; DYNC1LI1 and DYNC1LI2 bind mutually exclusive to DYNC1H1. Interacts with DYNC1I2. Interacts with BICD2. Interacts with DNALI1.

The protein localises to the cytoplasm. It localises to the cytoskeleton. In terms of biological role, cytoplasmic dynein 1 acts as a motor for the intracellular retrograde motility of vesicles and organelles along microtubules. Dynein has ATPase activity; the force-producing power stroke is thought to occur on release of ADP. Plays a role in mitotic spindle assembly and metaphase plate congression. This is Cytoplasmic dynein 1 heavy chain 1 (Dync1h1) from Rattus norvegicus (Rat).